Here is a 280-residue protein sequence, read N- to C-terminus: Phosphatidylserine decarboxylase proenzyme (280 aa).

Residues Asp90, His146, and Ser247 each act as charge relay system; for autoendoproteolytic cleavage activity in the active site. Ser247 serves as the catalytic Schiff-base intermediate with substrate; via pyruvic acid; for decarboxylase activity. Ser247 carries the pyruvic acid (Ser); by autocatalysis modification.

Belongs to the phosphatidylserine decarboxylase family. PSD-B subfamily. Prokaryotic type I sub-subfamily. Heterodimer of a large membrane-associated beta subunit and a small pyruvoyl-containing alpha subunit. Requires pyruvate as cofactor. Is synthesized initially as an inactive proenzyme. Formation of the active enzyme involves a self-maturation process in which the active site pyruvoyl group is generated from an internal serine residue via an autocatalytic post-translational modification. Two non-identical subunits are generated from the proenzyme in this reaction, and the pyruvate is formed at the N-terminus of the alpha chain, which is derived from the carboxyl end of the proenzyme. The autoendoproteolytic cleavage occurs by a canonical serine protease mechanism, in which the side chain hydroxyl group of the serine supplies its oxygen atom to form the C-terminus of the beta chain, while the remainder of the serine residue undergoes an oxidative deamination to produce ammonia and the pyruvoyl prosthetic group on the alpha chain. During this reaction, the Ser that is part of the protease active site of the proenzyme becomes the pyruvoyl prosthetic group, which constitutes an essential element of the active site of the mature decarboxylase.

It localises to the cell membrane. It catalyses the reaction a 1,2-diacyl-sn-glycero-3-phospho-L-serine + H(+) = a 1,2-diacyl-sn-glycero-3-phosphoethanolamine + CO2. Its pathway is phospholipid metabolism; phosphatidylethanolamine biosynthesis; phosphatidylethanolamine from CDP-diacylglycerol: step 2/2. Its function is as follows. Catalyzes the formation of phosphatidylethanolamine (PtdEtn) from phosphatidylserine (PtdSer). This Myxococcus xanthus (strain DK1622) protein is Phosphatidylserine decarboxylase proenzyme.